We begin with the raw amino-acid sequence, 188 residues long: UPF0461 protein C5orf24 (188 aa).

The segment covering 1–10 has biased composition (polar residues); the sequence is MMHPVASSNP. A disordered region spans residues 1–20; the sequence is MMHPVASSNPAFCGPGKPSC. Position 37 is a phosphoserine (Ser37). Residue Lys75 forms a Glycyl lysine isopeptide (Lys-Gly) (interchain with G-Cter in SUMO2) linkage. The segment at 79-142 is disordered; the sequence is KKKKNLNRSG…GYKVSPGRPP (64 aa). Over residues 80–92 the composition is skewed to basic residues; sequence KKKNLNRSGKRGR. Positions 94–107 are enriched in polar residues; sequence SGTTKSAGYRTSTG. Residues Ser121 and Ser180 each carry the phosphoserine modification. A Glycyl lysine isopeptide (Lys-Gly) (interchain with G-Cter in SUMO2) cross-link involves residue Lys184.

Belongs to the UPF0461 family.

This chain is UPF0461 protein C5orf24 (C5orf24), found in Homo sapiens (Human).